Consider the following 530-residue polypeptide: Sulfate adenylyltransferase (530 aa).

An N-terminal region spans residues 1 to 178 (MPIPAPHGGK…IQGLDYPTHY (178 aa)). The interval 179–410 (DYIPFRKTPT…LRESNPPRSK (232 aa)) is catalytic. Gln-208 provides a ligand contact to sulfate. Residues 208-211 (QTRN) and 304-307 (GRDH) contribute to the ATP site. Active-site residues include Thr-209, Arg-210, and Asn-211. Sulfate is bound at residue Arg-210. Position 308 (Ala-308) interacts with sulfate. Val-348 provides a ligand contact to ATP. A required for oligomerization; adenylyl-sulfate kinase-like region spans residues 411–530 (QGFAIVIDSS…LVSQGFYQQS (120 aa)).

The protein belongs to the sulfate adenylyltransferase family. In terms of assembly, homohexamer. Dimer of trimers.

It is found in the cytoplasm. The enzyme catalyses sulfate + ATP + H(+) = adenosine 5'-phosphosulfate + diphosphate. It functions in the pathway sulfur metabolism; hydrogen sulfide biosynthesis; sulfite from sulfate: step 1/3. Catalyzes the first intracellular reaction of sulfate assimilation, forming adenosine-5'-phosphosulfate (APS) from inorganic sulfate and ATP. Plays an important role in sulfate activation as a component of the biosynthesis pathway of sulfur-containing amino acids. This chain is Sulfate adenylyltransferase, found in Debaryomyces hansenii (strain ATCC 36239 / CBS 767 / BCRC 21394 / JCM 1990 / NBRC 0083 / IGC 2968) (Yeast).